A 56-amino-acid polypeptide reads, in one-letter code: Aspartyl-phosphate phosphatase YisI (56 aa).

This sequence belongs to the spo0E family.

Aspartyl-phosphate phosphatase which specifically dephosphorylates the sporulation transcription factor Spo0A-P and negatively regulates the sporulation initiation pathway in order to control the proper timing of sporulation. The protein is Aspartyl-phosphate phosphatase YisI (yisI) of Bacillus subtilis (strain 168).